Here is a 107-residue protein sequence, read N- to C-terminus: Cytochrome c2 (107 aa).

Heme c is bound by residues cysteine 14, cysteine 17, histidine 18, and methionine 80.

It belongs to the cytochrome c family. Binds 1 heme c group covalently per subunit.

Functionally, cytochrome c2 is found mainly in purple, non-sulfur, photosynthetic bacteria where it functions as the electron donor to the oxidized bacteriochlorophyll in the photophosphorylation pathway. However, it may also have a role in the respiratory chain and is found in some non-photosynthetic bacteria. The protein is Cytochrome c2 of Rhodoblastus acidophilus (Rhodopseudomonas acidophila).